A 501-amino-acid chain; its full sequence is Solute carrier family 2, facilitated glucose transporter member 5 (501 aa).

Met-1 is subject to N-acetylmethionine. The Cytoplasmic segment spans residues 1 to 18 (MEPQDPVKREGRLTPVIV). The helical transmembrane segment at 19-39 (LATLIAAFGSSFQYGYNVATI) threads the bilayer. A D-fructose-binding site is contributed by Tyr-32. Topologically, residues 40-68 (NSPSEFMKDFYNYTYYDRVGEYMNEFYLT) are extracellular. Asn-51 carries N-linked (GlcNAc...) asparagine glycosylation. The helical transmembrane segment at 69-91 (LLWSVTVSMFPFGGFLGSLMVGP) threads the bilayer. The Cytoplasmic portion of the chain corresponds to 92 to 98 (LVNNLGR). The chain crosses the membrane as a helical span at residues 99–119 (KGTLLFNNIFSIVPALLMGFS). Topologically, residues 120 to 126 (DLAKSFE) are extracellular. A helical membrane pass occupies residues 127–149 (MIIVARVLVGICAGLSSNVVPMY). Over 150–161 (LGELAPKNWRGA) the chain is Cytoplasmic. Residues 162–182 (LGVVPQLFITIGILVAQIFGL) form a helical membrane-spanning segment. Gln-167 provides a ligand contact to D-fructose. Over 183–192 (RSLLANEEGW) the chain is Extracellular. The helical transmembrane segment at 193–213 (PILLGLTGIPAVLQLLFLPFF) threads the bilayer. Residues 214–277 (PESPRYLLIQ…LFKMRSLRWQ (64 aa)) lie on the Cytoplasmic side of the membrane. Residues 278 to 298 (VISIIVLMAGQQLSGVNAIYY) traverse the membrane as a helical segment. Residues Gln-288 and 296–298 (IYY) each bind D-fructose. At 299–313 (YADQIYLSAGVKEDD) the chain is on the extracellular side. The chain crosses the membrane as a helical span at residues 314–334 (VQYVTAGTGAVNVLITVCAIF). At 335 to 342 (VVELMGRR) the chain is on the cytoplasmic side. A helical transmembrane segment spans residues 343–363 (FLLLLGFSVCFTACCVLTGAL). Topologically, residues 364-371 (AMQDVISW) are extracellular. Residues 372 to 394 (MPYVSIACVISYVIGHALGPSPI) form a helical membrane-spanning segment. Position 387 (His-387) interacts with D-fructose. Residues 395-412 (PALLVTEIFLQSSRPAAY) lie on the Cytoplasmic side of the membrane. Residues 413–433 (MVAGTVHWLSNFTVGLVFPFI) traverse the membrane as a helical segment. 419 to 420 (HW) is a D-fructose binding site. The Extracellular portion of the chain corresponds to 434 to 439 (QVGLGA). A helical transmembrane segment spans residues 440–460 (YSFVIFAVICFLTTVYIFLII). The Cytoplasmic segment spans residues 461 to 501 (PETKSKTFIEINQIFIKMNKVPGVHPEKEELKEFPPSTARQ).

Belongs to the major facilitator superfamily. Sugar transporter (TC 2.A.1.1) family. Glucose transporter subfamily.

It is found in the apical cell membrane. It localises to the cell membrane. Its subcellular location is the sarcolemma. The catalysed reaction is D-fructose(out) = D-fructose(in). In terms of biological role, functions as a fructose transporter that has only low activity with other monosaccharides. Can mediate the uptake of deoxyglucose, but with low efficiency. Essential for fructose uptake in the small intestine. Plays a role in the regulation of salt uptake and blood pressure in response to dietary fructose. Required for the development of high blood pressure in response to high dietary fructose intake. The chain is Solute carrier family 2, facilitated glucose transporter member 5 from Ovis aries (Sheep).